Here is a 177-residue protein sequence, read N- to C-terminus: Keratin-associated protein 1-1 (177 aa).

It belongs to the KRTAP type 1 family. As to quaternary structure, interacts with hair keratins. In terms of tissue distribution, expressed in the middle/upper portions of the hair cortex, in the region termed the keratogenous zone.

In terms of biological role, in the hair cortex, hair keratin intermediate filaments are embedded in an interfilamentous matrix, consisting of hair keratin-associated proteins (KRTAP), which are essential for the formation of a rigid and resistant hair shaft through their extensive disulfide bond cross-linking with abundant cysteine residues of hair keratins. The matrix proteins include the high-sulfur and high-glycine-tyrosine keratins. The polypeptide is Keratin-associated protein 1-1 (KRTAP1-1) (Homo sapiens (Human)).